Consider the following 208-residue polypeptide: Small ribosomal subunit protein uS4 (208 aa).

The S4 RNA-binding domain occupies 98–160 (SRLDNVAYNM…AKSYLRIKSS (63 aa)).

This sequence belongs to the universal ribosomal protein uS4 family. In terms of assembly, part of the 30S ribosomal subunit. Contacts protein S5. The interaction surface between S4 and S5 is involved in control of translational fidelity.

In terms of biological role, one of the primary rRNA binding proteins, it binds directly to 16S rRNA where it nucleates assembly of the body of the 30S subunit. Functionally, with S5 and S12 plays an important role in translational accuracy. The sequence is that of Small ribosomal subunit protein uS4 from Nitrosomonas eutropha (strain DSM 101675 / C91 / Nm57).